A 252-amino-acid polypeptide reads, in one-letter code: MAEELGLGFGEGVPVEVLPEGCRHRPEARAGLAARSKACLALTCCLLSFPILAGLSTLLMAGQLRVPGKDCMLRAITEERSEPSPQQVYSPPRGKPRAHLTIKKQTPAPHLKNQLSALHWEHDLGMAFTKNGMKYINKSLVIPESGDYFIYSQITFRGTTSVCGDISRGRRPNKPDSITVVITKVADSYPEPARLLTGSKSVCEISNNWFQSLYLGAMFSLEEGDRLMVNVSDISLVDYTKEDKTFFGAFLL.

Topologically, residues Met1–Cys39 are cytoplasmic. The helical; Signal-anchor for type II membrane protein transmembrane segment at Leu40–Met60 threads the bilayer. Residues Ala61–Leu252 lie on the Extracellular side of the membrane. Residues Pro96–Leu252 enclose the THD domain. Asn137 carries N-linked (GlcNAc...) asparagine glycosylation. Cysteines 163 and 203 form a disulfide. Asn230 carries an N-linked (GlcNAc...) asparagine glycan.

It belongs to the tumor necrosis factor family. As to quaternary structure, homotrimer.

The protein localises to the membrane. Its function is as follows. Receptor for TNFRSF25 and TNFRSF6B. Mediates activation of NF-kappa-B. Inhibits vascular endothelial growth and angiogenesis (in vitro). Promotes activation of caspases and apoptosis. Promotes splenocyte alloactivation. In Mus musculus (Mouse), this protein is Tumor necrosis factor ligand superfamily member 15 (Tnfsf15).